Consider the following 96-residue polypeptide: MEQAPEDQGPQREPYNQWALELLEELKNEAVRHFPRIWLHGLGQHIYETYGDTWAGVEAIIRILQQLLFIHFRIGCRHSRIGIIRQRRARNGASRS.

Positions 1-42 (MEQAPEDQGPQREPYNQWALELLEELKNEAVRHFPRIWLHGL) are homooligomerization. Serine 79, serine 94, and serine 96 each carry phosphoserine; by host.

It belongs to the HIV-1 VPR protein family. Homooligomer, may form homodimer. Interacts with p6-gag region of the Pr55 Gag precursor protein through a (Leu-X-X)4 motif near the C-terminus of the P6gag protein. Interacts with host UNG. May interact with host RAD23A/HHR23A. Interacts with host VPRBP/DCAF1, leading to hijack the CUL4A-RBX1-DDB1-DCAF1/VPRBP complex, mediating ubiquitination of host proteins such as TERT and ZGPAT and arrest of the cell cycle in G2 phase. In terms of processing, phosphorylated on several residues by host. These phosphorylations regulate VPR activity for the nuclear import of the HIV-1 pre-integration complex.

The protein localises to the virion. The protein resides in the host nucleus. Its subcellular location is the host extracellular space. In terms of biological role, during virus replication, may deplete host UNG protein, and incude G2-M cell cycle arrest. Acts by targeting specific host proteins for degradation by the 26S proteasome, through association with the cellular CUL4A-DDB1 E3 ligase complex by direct interaction with host VPRPB/DCAF-1. Cell cycle arrest reportedly occurs within hours of infection and is not blocked by antiviral agents, suggesting that it is initiated by the VPR carried into the virion. Additionally, VPR induces apoptosis in a cell cycle dependent manner suggesting that these two effects are mechanistically linked. Detected in the serum and cerebrospinal fluid of AIDS patient, VPR may also induce cell death to bystander cells. Functionally, during virus entry, plays a role in the transport of the viral pre-integration (PIC) complex to the host nucleus. This function is crucial for viral infection of non-dividing macrophages. May act directly at the nuclear pore complex, by binding nucleoporins phenylalanine-glycine (FG)-repeat regions. This is Protein Vpr from Human immunodeficiency virus type 1 group M subtype B (isolate MN) (HIV-1).